Reading from the N-terminus, the 430-residue chain is Probable sugar isomerase R00627 (430 aa).

3 residues coordinate Mn(2+): H257, D289, and D291.

Belongs to the rhamnose isomerase family. The cofactor is Mn(2+).

This Rhizobium meliloti (strain 1021) (Ensifer meliloti) protein is Probable sugar isomerase R00627.